Consider the following 520-residue polypeptide: AarF domain-containing protein kinase 1 (520 aa).

One can recognise a Protein kinase domain in the interval 148 to 455; the sequence is EFEKTPLGAA…GTHSSSSAFF (308 aa). ATP contacts are provided by residues 154 to 162 and lysine 176; that span reads LGAASLAQV. Residue aspartate 308 is the Proton acceptor of the active site.

The protein belongs to the protein kinase superfamily. ADCK protein kinase family.

It localises to the mitochondrion. In terms of biological role, appears to be essential for maintaining mitochondrial cristae formation and mitochondrial function by acting via YME1L1 in a kinase-independent manner to regulate essential mitochondrial structural proteins OPA1 and IMMT. The action of this enzyme is not yet clear. It is not known if it has protein kinase activity and what type of substrate it would phosphorylate (Ser, Thr or Tyr). The sequence is that of AarF domain-containing protein kinase 1 (adck1) from Xenopus laevis (African clawed frog).